The sequence spans 79 residues: DNA-directed RNA polymerase subunit omega (79 aa).

Belongs to the RNA polymerase subunit omega family. The RNAP catalytic core consists of 2 alpha, 1 beta, 1 beta' and 1 omega subunit. When a sigma factor is associated with the core the holoenzyme is formed, which can initiate transcription.

The enzyme catalyses RNA(n) + a ribonucleoside 5'-triphosphate = RNA(n+1) + diphosphate. Promotes RNA polymerase assembly. Latches the N- and C-terminal regions of the beta' subunit thereby facilitating its interaction with the beta and alpha subunits. This is DNA-directed RNA polymerase subunit omega (rpoZ) from Thermotoga maritima (strain ATCC 43589 / DSM 3109 / JCM 10099 / NBRC 100826 / MSB8).